A 244-amino-acid polypeptide reads, in one-letter code: UPF0246 protein FMG_1068 (244 aa).

The protein belongs to the UPF0246 family.

In Finegoldia magna (strain ATCC 29328 / DSM 20472 / WAL 2508) (Peptostreptococcus magnus), this protein is UPF0246 protein FMG_1068.